The primary structure comprises 234 residues: 5'-methylthioadenosine/S-adenosylhomocysteine nucleosidase (234 aa).

Catalysis depends on glutamate 12, which acts as the Proton acceptor. Substrate contacts are provided by residues glycine 78, isoleucine 152, and 173–174; that span reads ME. Aspartate 197 (proton donor) is an active-site residue.

Belongs to the PNP/UDP phosphorylase family. MtnN subfamily.

The catalysed reaction is S-adenosyl-L-homocysteine + H2O = S-(5-deoxy-D-ribos-5-yl)-L-homocysteine + adenine. The enzyme catalyses S-methyl-5'-thioadenosine + H2O = 5-(methylsulfanyl)-D-ribose + adenine. It catalyses the reaction 5'-deoxyadenosine + H2O = 5-deoxy-D-ribose + adenine. It participates in amino-acid biosynthesis; L-methionine biosynthesis via salvage pathway; S-methyl-5-thio-alpha-D-ribose 1-phosphate from S-methyl-5'-thioadenosine (hydrolase route): step 1/2. In terms of biological role, catalyzes the irreversible cleavage of the glycosidic bond in both 5'-methylthioadenosine (MTA) and S-adenosylhomocysteine (SAH/AdoHcy) to adenine and the corresponding thioribose, 5'-methylthioribose and S-ribosylhomocysteine, respectively. Also cleaves 5'-deoxyadenosine, a toxic by-product of radical S-adenosylmethionine (SAM) enzymes, into 5-deoxyribose and adenine. This chain is 5'-methylthioadenosine/S-adenosylhomocysteine nucleosidase, found in Desulfotalea psychrophila (strain LSv54 / DSM 12343).